A 446-amino-acid polypeptide reads, in one-letter code: MTEQKRKIEKLTGVKGMNDILPQDAGLWEFFEATVKSLLRAYGYQNIRTPIVEHTQLFTRGIGEVTDIVEKEMYSFTDALNGENLTMRPENTAAVVRASIEHNMLYDGPKRLWYIGPMFRHERPQRGRYRQFHQVGVEALGFAGPDADAEIIMMCQRLWDDLGLTGIKLEINSLGLAEERAAHRVELIKYLEQFADVLDEDAKRRLYTNPLRVLDTKNPALQDIAQNAPKLIDFLGDESRAHFEGLQRLLLANNIPFKINPRLVRGLDYYNLTVFEWVTDKLGAQGTVAAGGRYDPLIEQLGGKPTAACGWAMGIERILELLKEEDLAPEQEGVDVYVVHQGDTAREQAFIAAERLRDTGLDVIFHCSADGAPASFKSQMKRADASGAAFAVIFGEEEVANGTVGVKALRGAGAEGEKNVQQTVPVESLTEFLINAMVASAEDGDD.

It belongs to the class-II aminoacyl-tRNA synthetase family. Homodimer.

Its subcellular location is the cytoplasm. It catalyses the reaction tRNA(His) + L-histidine + ATP = L-histidyl-tRNA(His) + AMP + diphosphate + H(+). This chain is Histidine--tRNA ligase, found in Burkholderia cenocepacia (strain HI2424).